The chain runs to 341 residues: MATIKDVAKHAGVSTTTVSHVINKTRFVAENTKAAVWAAIKELHYSPSAVARSLKVNHTKSIGLLATSSEAPYFAEVIEAVENSCYSKGYTLILCNSHNNLDKQKAYLAMLAQKRVDGLLVMCSEYPDQLLGMLEDYRNIPMVVMDWGTARGDFTDSIIDNAFEGGYLAGRYLIERGHRDIGAIPGQLARNTGGGRHQGFLKALEEANIPVREEWIVQGDSEPESGYKAMHQILTQKHRPTAVFCGGDIMAMGAICAADELGLRVPQDISVIGYDNVRNARYFSPALTTIHQPKERLGETAFAMLLDRIVSKREDPQTIEVHPKLVERRSVADGPFRDYRR.

In terms of domain architecture, HTH lacI-type spans alanine 2–valine 56. The segment at residues isoleucine 4–asparagine 23 is a DNA-binding region (H-T-H motif). A DNA-binding region spans residues serine 48–valine 56. Hypoxanthine contacts are provided by tyrosine 73, arginine 190, threonine 192, and aspartate 275.

Homodimer.

It functions in the pathway purine metabolism; purine nucleotide biosynthesis [regulation]. In terms of biological role, is the main repressor of the genes involved in the de novo synthesis of purine nucleotides, regulating purB, purC, purEK, purF, purHD, purL, purMN and guaBA expression. PurR is allosterically activated to bind its cognate DNA by binding the purine corepressors, hypoxanthine or guanine, thereby effecting transcription repression. This chain is HTH-type transcriptional repressor PurR, found in Yersinia pestis bv. Antiqua (strain Antiqua).